Reading from the N-terminus, the 711-residue chain is Putative DNA topoisomerase 3 (711 aa).

The 134-residue stretch at 2 to 135 (KYLILAEKPS…LRRLWISSVT (134 aa)) folds into the Toprim domain. Residues Glu-8 and Asp-104 each contribute to the Mg(2+) site. A Topo IA-type catalytic domain is found at 152-580 (YNDLYYAALA…EMKGFTKDVV (429 aa)). Positions 186 to 191 (SLGRVQ) are interaction with DNA. The O-(5'-phospho-DNA)-tyrosine intermediate role is filled by Tyr-305. The segment at 691 to 711 (MNKNEGLDNNPFKDALKNLNL) is disordered.

It belongs to the type IA topoisomerase family. Mg(2+) is required as a cofactor.

The catalysed reaction is ATP-independent breakage of single-stranded DNA, followed by passage and rejoining.. In terms of biological role, releases the supercoiling and torsional tension of DNA, which is introduced during the DNA replication and transcription, by transiently cleaving and rejoining one strand of the DNA duplex. Introduces a single-strand break via transesterification at a target site in duplex DNA. The scissile phosphodiester is attacked by the catalytic tyrosine of the enzyme, resulting in the formation of a DNA-(5'-phosphotyrosyl)-enzyme intermediate and the expulsion of a 3'-OH DNA strand. The free DNA strand then undergoes passage around the unbroken strand, thus removing DNA supercoils. Finally, in the religation step, the DNA 3'-OH attacks the covalent intermediate to expel the active-site tyrosine and restore the DNA phosphodiester backbone. In Staphylococcus aureus (strain bovine RF122 / ET3-1), this protein is Putative DNA topoisomerase 3.